The primary structure comprises 247 residues: Phosphonates import ATP-binding protein PhnC (247 aa).

Positions 5-246 (IEVKNLVKNY…EDDIRKVYQT (242 aa)) constitute an ABC transporter domain. 37 to 44 (GESGAGKS) contacts ATP.

This sequence belongs to the ABC transporter superfamily. Phosphonates importer (TC 3.A.1.9.1) family. The complex is composed of two ATP-binding proteins (PhnC), two transmembrane proteins (PhnE) and a solute-binding protein (PhnD).

The protein localises to the cell inner membrane. The catalysed reaction is phosphonate(out) + ATP + H2O = phosphonate(in) + ADP + phosphate + H(+). Its function is as follows. Part of the ABC transporter complex PhnCDE involved in phosphonates import. Responsible for energy coupling to the transport system. The chain is Phosphonates import ATP-binding protein PhnC from Fusobacterium nucleatum subsp. nucleatum (strain ATCC 25586 / DSM 15643 / BCRC 10681 / CIP 101130 / JCM 8532 / KCTC 2640 / LMG 13131 / VPI 4355).